Here is a 101-residue protein sequence, read N- to C-terminus: Conopressin/conophysin, isoform 3 (101 aa).

Residue A1 is a signal peptide. A disulfide bond links C2 and C7. Position 10 is a glycine amide (G10). The propeptide occupies 11-18 (GKRNVDEG). Intrachain disulfides connect C23–C63, C26–C37, C31–C53, C38–C43, C70–C88, C82–C100, and C89–C94.

This sequence belongs to the vasopressin/oxytocin family. As to expression, expressed by the venom gland.

The protein resides in the secreted. Functionally, targets vasopressin-oxytocin related receptors. Is more active on fish receptors than on their human counterparts, supporting an evolved role of this conopressin in the envenomation process. Acts as an agonist on zebrafish vasopressin receptors V1a1R (EC(50)=10.6 nM), V1a2R (EC(50)=44.06 nM, partial agonist), V2R (EC(50)=299.2 nM) and oxytocin receptor (EC(50)=353.73 nM, partial agonist). Shows a weaker activity on human receptors AVPR1B (EC(50)=51.92 nM), AVPR1A (EC(50)=123.78 nM), AVPR2 (EC(50)=299.2 nM) and oxytocin (OXTR) receptor (EC(50)=455.66 nM, partial agonist). In vivo, exhibits grooming and scratching behavior in mice, following intracerebral injection. The chain is Conopressin/conophysin, isoform 3 from Conus monile (Necklace cone).